A 354-amino-acid polypeptide reads, in one-letter code: Histidinol-phosphate aminotransferase (354 aa).

Lysine 222 carries the N6-(pyridoxal phosphate)lysine modification.

Belongs to the class-II pyridoxal-phosphate-dependent aminotransferase family. Histidinol-phosphate aminotransferase subfamily. As to quaternary structure, homodimer. The cofactor is pyridoxal 5'-phosphate.

The enzyme catalyses L-histidinol phosphate + 2-oxoglutarate = 3-(imidazol-4-yl)-2-oxopropyl phosphate + L-glutamate. It participates in amino-acid biosynthesis; L-histidine biosynthesis; L-histidine from 5-phospho-alpha-D-ribose 1-diphosphate: step 7/9. This is Histidinol-phosphate aminotransferase from Staphylococcus carnosus (strain TM300).